Reading from the N-terminus, the 316-residue chain is 1-phosphofructokinase (316 aa).

ATP contacts are provided by residues 225 to 230 (SMGAGG) and 256 to 257 (GD). Asp-257 serves as the catalytic Proton acceptor.

Belongs to the carbohydrate kinase PfkB family.

It carries out the reaction beta-D-fructose 1-phosphate + ATP = beta-D-fructose 1,6-bisphosphate + ADP + H(+). Functionally, catalyzes the ATP-dependent phosphorylation of fructose-l-phosphate to fructose-l,6-bisphosphate. The polypeptide is 1-phosphofructokinase (Rhodobacter capsulatus (Rhodopseudomonas capsulata)).